A 282-amino-acid polypeptide reads, in one-letter code: Undecaprenyl-diphosphatase (282 aa).

Transmembrane regions (helical) follow at residues 90–110 (YWLG…GLVC), 121–141 (LWVV…AEYV), 165–185 (LALI…LFLG), 194–214 (FGFL…IPDA), 228–248 (QLLV…SWLL), and 256–276 (LYWF…LLAV).

Belongs to the UppP family.

It localises to the cell membrane. It catalyses the reaction di-trans,octa-cis-undecaprenyl diphosphate + H2O = di-trans,octa-cis-undecaprenyl phosphate + phosphate + H(+). Its function is as follows. Catalyzes the dephosphorylation of undecaprenyl diphosphate (UPP). Confers resistance to bacitracin. The sequence is that of Undecaprenyl-diphosphatase from Mycobacterium leprae (strain Br4923).